The following is a 724-amino-acid chain: MAFGQRNTSRGGRGGGGSSFRGRGGSRGGPRGRGGLRGGRGRGRGRPVFDSARLAQQKEEGEESNSESEESSQDEAMESEEESSDDDDAEPAPAVKSYAALMQSFTADSAPQAKRRKLNVDKEEKQDEEADLMDQDANDADHVEEAEEGPETATDGLLEEEDEEDNSDPFEAHFANPDDNILSRRLKHLENGQWAIQKSILAKIGRAITSVPGDDEAKQTKSSIINSPEELKLKQKLAGVMKKQCPTFDTLEKSISPLIFGYQDLLFCERNTSNAESLRRLTCLHAVNHVFKTRDRVIKNNSRLAREDNSDDLELRDQGFTRPKVLMLLPTRESCVRMVDMITSLCEPDQQENRKRFNDSYVDKEEKYSTDKPEDFRELFAGNDDDMFRLGLKFTRKTVKYFSQFYNSDIIFASPLGLRMAIGNEDAKKVDHDFLSSIEMVIVDQADALLMQNWEHVEFIFDHLNLQPKEAHGCDFSRVRSWYLDNNAKYFRQTIALAGFNTPELNTMFYNQSKNWAGKVKVSSNYPGAIQELGLKVKQTFSRLDSQSFASDPDSRFEYFTSAIIPTLTRRSKDSAGTLLFIPSYLDFVRVRNYFSTSATTRTLSFGSISEYTTPKEVARARSHFYSGRHTILLYTERAHHFRRYQIRGVKKVIMYGLPDNPIFYKEIVGGYLSRSVREGDLEPGDGSVRVVFSKWDVMKLERIAGTERVGKMIKEKGDTFDFL.

The disordered stretch occupies residues M1 to N176. The span at G11–G38 shows a compositional bias: gly residues. Acidic residues-rich tracts occupy residues E60–E90, Q126–P150, and L157–D168.

The protein belongs to the UTP25 family. As to quaternary structure, component of the ribosomal small subunit (SSU) processome composed of at least 40 protein subunits and snoRNA U3.

It is found in the nucleus. It localises to the nucleolus. In terms of biological role, DEAD-box RNA helicase-like protein required for pre-18S rRNA processing, specifically at sites A0, A1, and A2. The polypeptide is U3 small nucleolar RNA-associated protein 25 (utp25) (Sclerotinia sclerotiorum (strain ATCC 18683 / 1980 / Ss-1) (White mold)).